The primary structure comprises 640 residues: Fructose-1,6-bisphosphatase class 3 (640 aa).

Belongs to the FBPase class 3 family. The cofactor is Mn(2+).

The enzyme catalyses beta-D-fructose 1,6-bisphosphate + H2O = beta-D-fructose 6-phosphate + phosphate. Its pathway is carbohydrate biosynthesis; gluconeogenesis. The protein is Fructose-1,6-bisphosphatase class 3 of Lactococcus lactis subsp. cremoris (strain MG1363).